The following is a 365-amino-acid chain: tRNA 2-selenouridine synthase (365 aa).

A Rhodanese domain is found at F16–D138. The active-site S-selanylcysteine intermediate is the C98.

This sequence belongs to the SelU family. In terms of assembly, monomer.

The enzyme catalyses 5-methylaminomethyl-2-thiouridine(34) in tRNA + selenophosphate + (2E)-geranyl diphosphate + H2O + H(+) = 5-methylaminomethyl-2-selenouridine(34) in tRNA + (2E)-thiogeraniol + phosphate + diphosphate. It catalyses the reaction 5-methylaminomethyl-2-thiouridine(34) in tRNA + (2E)-geranyl diphosphate = 5-methylaminomethyl-S-(2E)-geranyl-thiouridine(34) in tRNA + diphosphate. It carries out the reaction 5-methylaminomethyl-S-(2E)-geranyl-thiouridine(34) in tRNA + selenophosphate + H(+) = 5-methylaminomethyl-2-(Se-phospho)selenouridine(34) in tRNA + (2E)-thiogeraniol. The catalysed reaction is 5-methylaminomethyl-2-(Se-phospho)selenouridine(34) in tRNA + H2O = 5-methylaminomethyl-2-selenouridine(34) in tRNA + phosphate. In terms of biological role, involved in the post-transcriptional modification of the uridine at the wobble position (U34) of tRNA(Lys), tRNA(Glu) and tRNA(Gln). Catalyzes the conversion of 2-thiouridine (S2U-RNA) to 2-selenouridine (Se2U-RNA). Acts in a two-step process involving geranylation of 2-thiouridine (S2U) to S-geranyl-2-thiouridine (geS2U) and subsequent selenation of the latter derivative to 2-selenouridine (Se2U) in the tRNA chain. The sequence is that of tRNA 2-selenouridine synthase from Psychromonas ingrahamii (strain DSM 17664 / CCUG 51855 / 37).